Here is a 448-residue protein sequence, read N- to C-terminus: MFGGWRLVVWQIFSEIITRRLGFWICLYFAALSVGMISGSEPLVRTRHIQNTHTVPINRSPGSLRAWQAGSTYVFGRQGGVITYSWPPHDRPSTRVDRLALGFSTLMEDATLVRVDSSAGLGDYLKLHIVKGNVVAVFNVGTYDINIEEKAKLVNDGNYHIVRFTRSGGNATLQVDDLPVIERFPPGHIDSHRLGTGRLPYRRLVEESLPKNGRQLTIFNSQMTIRIGGWQKQQVSGFQGQMSGFYYNGLKVFSMAADGDPNVRMEGSVRLVGELQSSSTPHGGATVYQSSVTEISSTTSNTITITYSTPADEQQTTDELLVASAECPSDDEDIDPCEPSSGTLCCFVPPAGPTGPAISSFPGPAEVFRESNGTTGMVVGIVAGAALCILILLYAMYKYRNRDEGSYHVDESRNYICNSNGAALKEKNTADDDSGSKSKKNKNKEYYV.

A signal peptide spans 1-38 (MFGGWRLVVWQIFSEIITRRLGFWICLYFAALSVGMIS). Residues 39 to 375 (GSEPLVRTRH…EVFRESNGTT (337 aa)) lie on the Extracellular side of the membrane. In terms of domain architecture, Laminin G-like spans 71 to 269 (STYVFGRQGG…DPNVRMEGSV (199 aa)). Residues 376-396 (GMVVGIVAGAALCILILLYAM) form a helical membrane-spanning segment. The Cytoplasmic segment spans residues 397–448 (YKYRNRDEGSYHVDESRNYICNSNGAALKEKNTADDDSGSKSKKNKNKEYYV). Residues 426 to 436 (EKNTADDDSGS) are compositionally biased toward basic and acidic residues. Residues 426–448 (EKNTADDDSGSKSKKNKNKEYYV) form a disordered region.

This sequence belongs to the neurexin family.

It localises to the membrane. Its function is as follows. Neuronal cell surface protein that may be involved in cell recognition and cell adhesion. May play a role in formation or maintenance of synaptic junctions. The chain is Neurexin-1b-beta (nrxn1b) from Danio rerio (Zebrafish).